Consider the following 617-residue polypeptide: Dihydroxy-acid dehydratase (617 aa).

Asp81 is a binding site for Mg(2+). Cys122 contacts [2Fe-2S] cluster. Residues Asp123 and Lys124 each coordinate Mg(2+). An N6-carboxylysine modification is found at Lys124. Residue Cys195 participates in [2Fe-2S] cluster binding. A Mg(2+)-binding site is contributed by Glu491. Catalysis depends on Ser517, which acts as the Proton acceptor.

The protein belongs to the IlvD/Edd family. In terms of assembly, homodimer. Requires [2Fe-2S] cluster as cofactor. The cofactor is Mg(2+).

The enzyme catalyses (2R)-2,3-dihydroxy-3-methylbutanoate = 3-methyl-2-oxobutanoate + H2O. The catalysed reaction is (2R,3R)-2,3-dihydroxy-3-methylpentanoate = (S)-3-methyl-2-oxopentanoate + H2O. Its pathway is amino-acid biosynthesis; L-isoleucine biosynthesis; L-isoleucine from 2-oxobutanoate: step 3/4. It participates in amino-acid biosynthesis; L-valine biosynthesis; L-valine from pyruvate: step 3/4. Functions in the biosynthesis of branched-chain amino acids. Catalyzes the dehydration of (2R,3R)-2,3-dihydroxy-3-methylpentanoate (2,3-dihydroxy-3-methylvalerate) into 2-oxo-3-methylpentanoate (2-oxo-3-methylvalerate) and of (2R)-2,3-dihydroxy-3-methylbutanoate (2,3-dihydroxyisovalerate) into 2-oxo-3-methylbutanoate (2-oxoisovalerate), the penultimate precursor to L-isoleucine and L-valine, respectively. The chain is Dihydroxy-acid dehydratase from Buchnera aphidicola subsp. Acyrthosiphon pisum (strain 5A).